Reading from the N-terminus, the 433-residue chain is Histidinol dehydrogenase (433 aa).

Serine 236, glutamine 258, and histidine 261 together coordinate substrate. Residues glutamine 258 and histidine 261 each coordinate Zn(2+). Residues glutamate 325 and histidine 326 each act as proton acceptor in the active site. 4 residues coordinate substrate: histidine 326, aspartate 359, glutamate 413, and histidine 418. Aspartate 359 is a Zn(2+) binding site. Histidine 418 lines the Zn(2+) pocket.

The protein belongs to the histidinol dehydrogenase family. Zn(2+) serves as cofactor.

It catalyses the reaction L-histidinol + 2 NAD(+) + H2O = L-histidine + 2 NADH + 3 H(+). Its pathway is amino-acid biosynthesis; L-histidine biosynthesis; L-histidine from 5-phospho-alpha-D-ribose 1-diphosphate: step 9/9. Its function is as follows. Catalyzes the sequential NAD-dependent oxidations of L-histidinol to L-histidinaldehyde and then to L-histidine. The polypeptide is Histidinol dehydrogenase (Pseudoalteromonas translucida (strain TAC 125)).